The following is a 299-amino-acid chain: tRNA pseudouridine synthase B (299 aa).

The active-site Nucleophile is Asp-38.

The protein belongs to the pseudouridine synthase TruB family. Type 1 subfamily.

It catalyses the reaction uridine(55) in tRNA = pseudouridine(55) in tRNA. Its function is as follows. Responsible for synthesis of pseudouridine from uracil-55 in the psi GC loop of transfer RNAs. The chain is tRNA pseudouridine synthase B from Pediococcus pentosaceus (strain ATCC 25745 / CCUG 21536 / LMG 10740 / 183-1w).